Consider the following 718-residue polypeptide: Myeloperoxidase (718 aa).

An N-terminal signal peptide occupies residues 1–15 (MKLLLALAGLLAPLA). Residues 16-138 (MLQTSNGATP…SSGCAYQDVR (123 aa)) constitute a propeptide that is removed on maturation. The N-linked (GlcNAc...) asparagine glycan is linked to N113. C141 and C154 are disulfide-bonded. Heme b is bound at residue D234. The active-site Proton acceptor is the H235. Position 236 (D236) interacts with Ca(2+). 2 disulfide bridges follow: C255/C265 and C259/C283. C290 is subject to Cysteine sulfenic acid (-SOH). The N-linked (GlcNAc...) asparagine glycan is linked to N297. Ca(2+) contacts are provided by T308, F310, D312, and S314. Residues N329 and N365 are each glycosylated (N-linked (GlcNAc...) asparagine). An intrachain disulfide couples C361 to C372. The heme b site is built by E382 and M383. N-linked (GlcNAc...) asparagine glycosylation is present at N457. H476 contributes to the heme b binding site. Intrachain disulfides connect C580-C637 and C678-C704. The N-linked (GlcNAc...) asparagine glycan is linked to N711.

The protein belongs to the peroxidase family. XPO subfamily. Homodimer; disulfide-linked. Each monomer consists of a light and a heavy chain. Found in a complex with CP and LTF; interacts directly with CP, which protects CP antioxidant properties by MPO. Requires Ca(2+) as cofactor. Heme b serves as cofactor.

It is found in the lysosome. It catalyses the reaction chloride + H2O2 + H(+) = hypochlorous acid + H2O. Part of the host defense system of polymorphonuclear leukocytes. It is responsible for microbicidal activity against a wide range of organisms. In the stimulated PMN, MPO catalyzes the production of hypohalous acids, primarily hypochlorous acid in physiologic situations, and other toxic intermediates that greatly enhance PMN microbicidal activity. Mediates the proteolytic cleavage of alpha-1-microglobulin to form t-alpha-1-microglobulin, which potently inhibits oxidation of low density lipoprotein particles and limits vascular damage. The polypeptide is Myeloperoxidase (Mpo) (Mus musculus (Mouse)).